Consider the following 255-residue polypeptide: Small ribosomal subunit protein uS2 (255 aa).

The protein belongs to the universal ribosomal protein uS2 family.

This is Small ribosomal subunit protein uS2 (rpsB) from Streptococcus pyogenes serotype M1.